Reading from the N-terminus, the 84-residue chain is Sec-independent protein translocase protein TatA (84 aa).

A helical transmembrane segment spans residues 1–21; it reads MGGFSIWHWLIVLLIVVMVFG. The interval 40–84 is disordered; the sequence is KDGMKDGGQSPADEKPVVPASQVTNAQAADKAERNTIDVEARQKS. The span at 69–84 shows a compositional bias: basic and acidic residues; that stretch reads DKAERNTIDVEARQKS.

The protein belongs to the TatA/E family. In terms of assembly, the Tat system comprises two distinct complexes: a TatABC complex, containing multiple copies of TatA, TatB and TatC subunits, and a separate TatA complex, containing only TatA subunits. Substrates initially bind to the TatABC complex, which probably triggers association of the separate TatA complex to form the active translocon.

Its subcellular location is the cell inner membrane. Its function is as follows. Part of the twin-arginine translocation (Tat) system that transports large folded proteins containing a characteristic twin-arginine motif in their signal peptide across membranes. TatA could form the protein-conducting channel of the Tat system. This chain is Sec-independent protein translocase protein TatA, found in Polaromonas naphthalenivorans (strain CJ2).